The chain runs to 906 residues: Protein translocase subunit SecA (906 aa).

Residues Q89, 107 to 111, and D502 contribute to the ATP site; that span reads GEGKT. The interval 868-887 is disordered; sequence VPPAQRDPADPRTWGKVSRN. Residues C890, C892, C901, and H902 each coordinate Zn(2+).

The protein belongs to the SecA family. In terms of assembly, monomer and homodimer. Part of the essential Sec protein translocation apparatus which comprises SecA, SecYEG and auxiliary proteins SecDF-YajC and YidC. Zn(2+) is required as a cofactor.

It localises to the cell inner membrane. It is found in the cytoplasm. The catalysed reaction is ATP + H2O + cellular proteinSide 1 = ADP + phosphate + cellular proteinSide 2.. Functionally, part of the Sec protein translocase complex. Interacts with the SecYEG preprotein conducting channel. Has a central role in coupling the hydrolysis of ATP to the transfer of proteins into and across the cell membrane, serving both as a receptor for the preprotein-SecB complex and as an ATP-driven molecular motor driving the stepwise translocation of polypeptide chains across the membrane. The chain is Protein translocase subunit SecA from Brucella melitensis biotype 1 (strain ATCC 23456 / CCUG 17765 / NCTC 10094 / 16M).